Reading from the N-terminus, the 196-residue chain is Probable splicing factor, arginine/serine-rich 4 (196 aa).

Residues 19–97 (TSLKIDNLSY…RELRVTLAKY (79 aa)) form the RRM domain. The span at 91–106 (RVTLAKYDRPSDERGG) shows a compositional bias: basic and acidic residues. A disordered region spans residues 91 to 196 (RVTLAKYDRP…SPSRSRSNSR (106 aa)). The span at 112-141 (GRRRSRSPRRRSRSPRYSRSRSPRRSRSRT) shows a compositional bias: basic residues. 2 stretches are compositionally biased toward basic and acidic residues: residues 145-160 (PSRD…DNSR) and 167-176 (PPREDGSPKE). Residues 184–196 (ASRSPSRSRSNSR) are compositionally biased toward low complexity.

The protein belongs to the splicing factor SR family. Post-translationally, extensively phosphorylated on serine residues in the RS domain.

It localises to the nucleus. May play a functionally redundant role in embryogenesis. The protein is Probable splicing factor, arginine/serine-rich 4 (rsp-4) of Caenorhabditis elegans.